Reading from the N-terminus, the 942-residue chain is Alpha,alpha-trehalose-phosphate synthase [UDP-forming] 1 (942 aa).

The segment at 28–57 (REKRKSNRARNPNDVAGSSENSENDLRLEG) is disordered. Residues 92 to 559 (QRLLVVANRL…AETFVSELND (468 aa)) form a glycosyltransferase region. Positions 815-892 (DMPAIARSRP…LGNSRRPSPE (78 aa)) are disordered. Composition is skewed to low complexity over residues 821–833 (RSRP…AKSS) and 841–867 (SKST…NKSS). Polar residues predominate over residues 879–888 (SNHSLGNSRR).

The protein in the N-terminal section; belongs to the glycosyltransferase 20 family. It in the C-terminal section; belongs to the trehalose phosphatase family. In terms of tissue distribution, expressed in seedlings, leaves, roots, stems, flowers and siliques.

The protein localises to the vacuole. It localises to the secreted. It is found in the cell wall. Its subcellular location is the cytoplasm. The catalysed reaction is D-glucose 6-phosphate + UDP-alpha-D-glucose = alpha,alpha-trehalose 6-phosphate + UDP + H(+). Functionally, required for normal embryo development, vegetative growth and transition to flowering. Regulates embryo growth, cell wall deposition, starch and sucrose degradation, but not cell differentiation. Involved in the regulation of glucose sensing and signaling genes during plant development. In Arabidopsis thaliana (Mouse-ear cress), this protein is Alpha,alpha-trehalose-phosphate synthase [UDP-forming] 1.